The following is a 63-amino-acid chain: Protein Wfdc21 (63 aa).

The N-terminal stretch at 1–24 (MKLGAFLLLVSLITLSLEVQELQA) is a signal peptide. In terms of domain architecture, WAP; atypical spans 25-63 (AVRPLQLLGTCAELCRGDWDCGPEEQCVSIGCSHICTTN). Disulfide bonds link Cys35–Cys56, Cys39–Cys51, and Cys45–Cys60.

In terms of tissue distribution, predominantly expressed in white adipose tissue and liver.

It is found in the secreted. Functionally, may promote activation of the metalloproteinase MMP2. In Mus musculus (Mouse), this protein is Protein Wfdc21.